A 385-amino-acid polypeptide reads, in one-letter code: DNA replication and repair protein RecF (385 aa).

Residue 30–37 coordinates ATP; it reads GPNGNGKT.

The protein belongs to the RecF family.

The protein localises to the cytoplasm. Its function is as follows. The RecF protein is involved in DNA metabolism; it is required for DNA replication and normal SOS inducibility. RecF binds preferentially to single-stranded, linear DNA. It also seems to bind ATP. The protein is DNA replication and repair protein RecF of Mycobacterium leprae (strain Br4923).